Reading from the N-terminus, the 339-residue chain is tRNA N6-adenosine threonylcarbamoyltransferase (339 aa).

Fe cation contacts are provided by His-111 and His-115. Residues Leu-134–Gly-138, Asp-167, Gly-180, and Asn-272 each bind substrate. Asp-300 lines the Fe cation pocket.

Belongs to the KAE1 / TsaD family. Requires Fe(2+) as cofactor.

The protein localises to the cytoplasm. It carries out the reaction L-threonylcarbamoyladenylate + adenosine(37) in tRNA = N(6)-L-threonylcarbamoyladenosine(37) in tRNA + AMP + H(+). Required for the formation of a threonylcarbamoyl group on adenosine at position 37 (t(6)A37) in tRNAs that read codons beginning with adenine. Is involved in the transfer of the threonylcarbamoyl moiety of threonylcarbamoyl-AMP (TC-AMP) to the N6 group of A37, together with TsaE and TsaB. TsaD likely plays a direct catalytic role in this reaction. In Vibrio cholerae serotype O1 (strain ATCC 39541 / Classical Ogawa 395 / O395), this protein is tRNA N6-adenosine threonylcarbamoyltransferase.